Here is a 659-residue protein sequence, read N- to C-terminus: MQENLRFASSGDDVKIWDASSMTLVDKFNPHTAPHAISSVCWSSNNNFLVTASSSGDKIVVSSCKCKPVPLLELGEGQKQTCVSLNSTSMYLVSGGLNNTVNIWDLKSKRVHRSLKDHKDEVTCVTYNWNDCYIASGSLSGEIILHSVTTNLSSTPFGHGSNQSIRHLKYSLFKKSLLGSVSDNGIVTLWDVNSQSPYHNFDSTHKAPASGICFSPVNELLFVTVGLDKRIILYDTSSKKLVKTLVADAPLTAVDFMPDGATLAIGSSRGKIYQYDLRMLKSPIKTISAHKTSVQCIAFQYSTVLSKSGLNKGCSNKPTAVNKRTANVSAGGGGAQNPGVVREAATTSIATVPPQPTAAAVGKGAVAPQDKAGLPRSINTDTLSKEAESGKNQDFSNFDDSGKSSLGDMFSPVRDDAVVSKGGDESIGKGDGLDFLPQLNSVFPPRKNPVVSSTSVLHSSPLNVFMGSPGKEENENHDLTAESKKMYLGKQESKDSFKQFAKLISGAETGNLNASPSSNQTRSPEKFEKPEKEIEAQLINEPPGNGSSTPNPKIASSVTAGVAGSLSEKIVDTIGNSRPNAPLSSVQIRFIQNMIQETLDDFREACHRDIVNLQVEMIKQFHMQLNEMHSLLERYSVNEGLVAEIERLREENKRLRAHF.

WD repeat units lie at residues 1–31 (MQEN…FNPH), 32–71 (TAPH…PVPL), 75–114 (GEGQ…VHRS), 117–156 (DHKD…SSTP), 160–200 (GSNQ…PYHN), 204–244 (THKA…LVKT), 246–285 (VADA…SPIK), and 289–332 (AHKT…SAGG). Residue threonine 382 is modified to Phosphothreonine; by PLK1. Residues 383–433 (LSKEAESGKNQDFSNFDDSGKSSLGDMFSPVRDDAVVSKGGDESIGKGDGL) are disordered. Serine 411 is modified (phosphoserine). Residues 413–432 (VRDDAVVSKGGDESIGKGDG) are compositionally biased toward basic and acidic residues. Serine 426 bears the Phosphoserine; by PLK1 mark. Residues serine 468 and serine 515 each carry the phosphoserine modification. Residues 508-522 (ETGNLNASPSSNQTR) are compositionally biased toward polar residues. The interval 508-531 (ETGNLNASPSSNQTRSPEKFEKPE) is disordered. At threonine 549 the chain carries Phosphothreonine; by CDK1. Serine 636 is subject to Phosphoserine; by PLK1.

In terms of assembly, interacts with FAM29A. Interacts with HSPA1A and HSPA1B. Interacts with gamma-tubulin in a HSPA1A/B-dependent manner. Post-translationally, during mitosis, prior phosphorylation on Thr-549 by CDK1 promotes subsequent phosphorylation by PLK1 on Thr-382, Ser-426 and Ser-636. Phosphorylated NEDD1 can interact with gamma-tubulin for targeting the gamma-tubulin ring complex (gTuRC) to the centrosome, an important step for spindle formation.

The protein localises to the cytoplasm. It is found in the cytoskeleton. It localises to the microtubule organizing center. Its subcellular location is the centrosome. Functionally, required for mitosis progression. Promotes the nucleation of microtubules from the spindle. This Bos taurus (Bovine) protein is Protein NEDD1 (NEDD1).